A 205-amino-acid polypeptide reads, in one-letter code: ESCRT-related protein CHMP1 (205 aa).

Coiled coils occupy residues 13–51 (DLKF…MDGA) and 109–140 (GNLQ…GAMA).

Belongs to the SNF7 family.

The protein localises to the cytoplasm. Its subcellular location is the endosome membrane. Functionally, involved in ESCRT-dependent multivesicular body (MVB) formation and sorting of endosomal cargo proteins into MVBs. The protein is ESCRT-related protein CHMP1 of Oryza sativa subsp. japonica (Rice).